The chain runs to 350 residues: Vetispiradiene synthase 3 (350 aa).

Residues Asp-103, Asp-107, Asp-246, Thr-250, and Glu-254 each contribute to the Mg(2+) site. Residues 103–107 carry the DDXXD motif motif; it reads DDTFD.

It belongs to the terpene synthase family. Tpsa subfamily. The cofactor is Mg(2+).

The protein resides in the cytoplasm. The enzyme catalyses (2E,6E)-farnesyl diphosphate = (-)-vetispiradiene + diphosphate. The protein operates within secondary metabolite biosynthesis; terpenoid biosynthesis. In terms of biological role, sesquiterpene synthase that catalyzes the formation of vetispiradiene from trans,trans-farnesyl diphosphate. The initial internal cyclization produces the monocyclic intermediate germacrene A. This is Vetispiradiene synthase 3 from Hyoscyamus muticus (Egyptian henbane).